We begin with the raw amino-acid sequence, 541 residues long: Probable inorganic phosphate transporter 1-12 (541 aa).

The Cytoplasmic segment spans residues 1-26 (MGRQDQQLQVLNALDAAKTQWYHFTA). A helical membrane pass occupies residues 27 to 47 (IIVAGMGFFTDAYDLFCISLV). Residues 48 to 70 (TKLLGRIYYTDPASPTPGSLPPN) are Extracellular-facing. The chain crosses the membrane as a helical span at residues 71-91 (IAAAVNGVALCGTLSGQLFFG). The Cytoplasmic portion of the chain corresponds to 92 to 100 (WLGDKLGRK). The helical transmembrane segment at 101–121 (SVYGMTLLLMVICSIASGLSF) threads the bilayer. Over 122–124 (SHT) the chain is Extracellular. Residues 125 to 145 (PTSVMATLCFFRFWLGFGIGG) form a helical membrane-spanning segment. Residues 146–163 (DYPLSATIMSEYANKKTR) lie on the Cytoplasmic side of the membrane. The chain crosses the membrane as a helical span at residues 164-184 (GAFIAAVFAMQGFGILAGGVV). At 185 to 213 (TLAMSAGFQAAFPAPAYEVNAAASTVPQA) the chain is on the extracellular side. Residues 214–234 (DYVWRIILMLGALPAILTYYW) traverse the membrane as a helical segment. Topologically, residues 235–297 (RMKMPETARY…ARFAKRHGAH (63 aa)) are cytoplasmic. A helical transmembrane segment spans residues 298–318 (LLGTAATWFLVDVAYYSQNLF). At 319-349 (QKDIFTSIHWIPKARTMSELEEVFRISRAQT) the chain is on the extracellular side. Residues 350 to 370 (LIALCGTVPGYWFTVFLIDII) form a helical membrane-spanning segment. At 371–374 (GRFK) the chain is on the cytoplasmic side. The chain crosses the membrane as a helical span at residues 375–395 (IQLLGFAGMTAFMLGLAIPYH). The Extracellular portion of the chain corresponds to 396-403 (HWTMPGNQ). Residues 404–424 (VIFVFLYGFTFFFANFGPNAT) form a helical membrane-spanning segment. Topologically, residues 425-443 (TFIVPAEIFPARLRSTCHG) are cytoplasmic. Residues 444–464 (ISAASGKAGAIIGAFGFLYAA) form a helical membrane-spanning segment. At 465-484 (QPQDKAHVDAGYKPGIGVRN) the chain is on the extracellular side. Residues 485–505 (ALFVLAGCNLVGFLMTWMLVP) traverse the membrane as a helical segment. The Cytoplasmic segment spans residues 506–541 (ESKGKSLEEMSGEADDEEASANGGATAVNSSGVEMV). A disordered region spans residues 512–541 (LEEMSGEADDEEASANGGATAVNSSGVEMV). Acidic residues predominate over residues 515 to 524 (MSGEADDEEA). Residues 532–541 (AVNSSGVEMV) show a composition bias toward polar residues.

The protein belongs to the major facilitator superfamily. Phosphate:H(+) symporter (TC 2.A.1.9) family.

It is found in the membrane. Its function is as follows. High-affinity transporter for external inorganic phosphate. The chain is Probable inorganic phosphate transporter 1-12 (PHT1-12) from Oryza sativa subsp. japonica (Rice).